A 505-amino-acid polypeptide reads, in one-letter code: Membrane-bound O-acyltransferase GUP1 (505 aa).

Residues 1 to 217 lie on the Extracellular side of the membrane; the sequence is MFKAAMDASN…VAPIPLTDYN (217 aa). A helical transmembrane segment spans residues 218–238; sequence FVNYMAYITYAPLFIAGPIIT. Topologically, residues 239–266 are cytoplasmic; sequence FNDYIYQSDYKAMSSVKDYKRTFIYFLR. Residues 267-287 traverse the membrane as a helical segment; that stretch reads FAFCILVMEFLLHFMYVVAVS. Residues 288-296 are Extracellular-facing; that stretch reads KTKAWEGDT. A helical transmembrane segment spans residues 297-317; the sequence is PFQLSMLGLFNLNIIWLKLLI. The Cytoplasmic portion of the chain corresponds to 318–377; the sequence is PWRLFRLWSLIDGIDPPENMIRCMDNNFSTLAFWRAWHRSYNRWIIRYIYIPLGGGGKYR. The next 2 membrane-spanning stretches (helical) occupy residues 378–398 and 399–419; these read ILNSLCVFSFVAIWHDIELKL and LMWGWLVVIFIIPELAATAIF. Residue H392 is part of the active site. At 420 to 430 the chain is on the cytoplasmic side; sequence KNYQHEPWYRH. The helical transmembrane segment at 431-451 threads the bilayer; it reads VCALGAVINIWMMMLANLFGF. Topologically, residues 452–464 are extracellular; the sequence is CMGKDGTMSLIKT. Residues 465-485 form a helical membrane-spanning segment; sequence LFTTAVGLRFLFLSLGALFVG. Residues 486–505 are Cytoplasmic-facing; the sequence is SQVMFELREAEKRRGVNVKC.

It belongs to the membrane-bound acyltransferase family.

It localises to the cell membrane. The protein resides in the endoplasmic reticulum membrane. It is found in the mitochondrion membrane. In terms of biological role, membrane-bound O-acyltransferase involved in the remodeling of glycosylphosphatidylinositol (GPI) anchors. Acts only on GPI-anchored proteins, but not on free GPI lipids. Also involved in lipid metabolism, having profound effects on sphingolipid-sterol-ordered domains integrity and assembly. Involved in cell integrity and apoptosis. The protein is Membrane-bound O-acyltransferase GUP1 (GUP1) of Millerozyma farinosa (Yeast).